Consider the following 62-residue polypeptide: Photosystem II reaction center protein Z (62 aa).

The next 2 helical transmembrane spans lie at 8–28 (AVFA…VVFA) and 41–61 (FSGT…NSLI).

This sequence belongs to the PsbZ family. As to quaternary structure, PSII is composed of 1 copy each of membrane proteins PsbA, PsbB, PsbC, PsbD, PsbE, PsbF, PsbH, PsbI, PsbJ, PsbK, PsbL, PsbM, PsbT, PsbY, PsbZ, Psb30/Ycf12, at least 3 peripheral proteins of the oxygen-evolving complex and a large number of cofactors. It forms dimeric complexes.

It localises to the plastid. The protein localises to the chloroplast thylakoid membrane. Functionally, may control the interaction of photosystem II (PSII) cores with the light-harvesting antenna, regulates electron flow through the 2 photosystem reaction centers. PSII is a light-driven water plastoquinone oxidoreductase, using light energy to abstract electrons from H(2)O, generating a proton gradient subsequently used for ATP formation. This Pelargonium hortorum (Common geranium) protein is Photosystem II reaction center protein Z.